A 352-amino-acid chain; its full sequence is Selenide, water dikinase (352 aa).

The active site involves Cys23. Residues Lys26 and 54–56 contribute to the ATP site; that span reads SRD. Residue Asp57 coordinates Mg(2+). ATP-binding positions include Asp74, Asp97, and 145–147; that span reads GHS. Residue Asp97 coordinates Mg(2+). Position 233 (Asp233) interacts with Mg(2+).

This sequence belongs to the selenophosphate synthase 1 family. Class I subfamily. In terms of assembly, homodimer. Mg(2+) is required as a cofactor.

It catalyses the reaction hydrogenselenide + ATP + H2O = selenophosphate + AMP + phosphate + 2 H(+). Functionally, synthesizes selenophosphate from selenide and ATP. This Shewanella baltica (strain OS223) protein is Selenide, water dikinase.